The following is an 858-amino-acid chain: Ubiquitin carboxyl-terminal hydrolase 13 (858 aa).

Ser112 bears the Phosphoserine mark. Residues 185 to 293 (PVSKYANNLV…KHLAHFGIDM (109 aa)) form a UBP-type; degenerate zinc finger. Residues Cys209, Cys212, Cys229, and His242 each coordinate Zn(2+). A Glycyl lysine isopeptide (Lys-Gly) (interchain with G-Cter in SUMO2) cross-link involves residue Lys309. One can recognise a USP domain in the interval 334–856 (TGLKNLGNSC…LGYMYFYRRI (523 aa)). Cys343 functions as the Nucleophile in the catalytic mechanism. Lys403 is covalently cross-linked (Glycyl lysine isopeptide (Lys-Gly) (interchain with G-Cter in SUMO2)). 2 consecutive UBA domains span residues 650–691 (DIDE…IIVH) and 722–762 (QPPE…IFSH). The active-site Proton acceptor is the His818.

It belongs to the peptidase C19 family. Interacts with UFD1. Interacts (via UBA domains) with SIAH2 (when ubiquitinated). Interacts with BAG6; the interaction is direct and may mediate UBL4A deubiquitination. Interacts (via UBA 2 domain) with AMFR; the interaction is direct. Interacts with UBL4A; may be indirect via BAG6. Interacts with NEDD4.

It is found in the cytoplasm. The catalysed reaction is Thiol-dependent hydrolysis of ester, thioester, amide, peptide and isopeptide bonds formed by the C-terminal Gly of ubiquitin (a 76-residue protein attached to proteins as an intracellular targeting signal).. Specifically inhibited by spautin-1 (specific and potent autophagy inhibitor-1), a derivative of MBCQ that binds to USP13 and inhibits deubiquitinase activity. Regulated by PIK3C3/VPS34-containing complexes. The weak deubiquitinase activity in vitro suggests the existence of some mechanism that activates the enzyme. Its function is as follows. Deubiquitinase that mediates deubiquitination of target proteins such as BECN1, MITF, SKP2 and USP10 and is involved in various processes such as autophagy, endoplasmic reticulum-associated degradation (ERAD), cell cycle progression or DNA damage response. Component of a regulatory loop that controls autophagy and p53/TP53 levels: mediates deubiquitination of BECN1, a key regulator of autophagy, leading to stabilize the PIK3C3/VPS34-containing complexes. Alternatively, forms with NEDD4 a deubiquitination complex, which subsequently stabilizes VPS34 to promote autophagy. Also deubiquitinates USP10, an essential regulator of p53/TP53 stability. In turn, PIK3C3/VPS34-containing complexes regulate USP13 stability, suggesting the existence of a regulatory system by which PIK3C3/VPS34-containing complexes regulate p53/TP53 protein levels via USP10 and USP13. Recruited by nuclear UFD1 and mediates deubiquitination of SKP2, thereby regulating endoplasmic reticulum-associated degradation (ERAD). Also regulates ERAD through the deubiquitination of UBL4A a component of the BAG6/BAT3 complex. Mediates stabilization of SIAH2 independently of deubiquitinase activity: binds ubiquitinated SIAH2 and acts by impairing SIAH2 autoubiquitination. Regulates the cell cycle progression by stabilizing cell cycle proteins such as SKP2 and AURKB. In addition, plays an important role in maintaining genomic stability and in DNA replication checkpoint activation via regulation of RAP80 and TOPBP1. Deubiquitinates the multifunctional protein HMGB1 and subsequently drives its nucleocytoplasmic localization and its secretion. Positively regulates type I and type II interferon signalings by deubiquitinating STAT1 but negatively regulates antiviral response by deubiquitinating STING1. In Mus musculus (Mouse), this protein is Ubiquitin carboxyl-terminal hydrolase 13 (Usp13).